A 106-amino-acid polypeptide reads, in one-letter code: MNDSEFHQLADQLMLYIEETLDGFTGDSDIDYETNGGVMTLTFENGSKIVINRQEPLHQVWLATKAGGYHFNYRDGHWYCSRSGEEFLAKLSEAASAQAGENVSFG.

The protein belongs to the frataxin family.

Functionally, involved in iron-sulfur (Fe-S) cluster assembly. May act as a regulator of Fe-S biogenesis. In Yersinia pseudotuberculosis serotype O:3 (strain YPIII), this protein is Iron-sulfur cluster assembly protein CyaY.